Consider the following 185-residue polypeptide: Photosystem I assembly protein Ycf4 (185 aa).

Transmembrane regions (helical) follow at residues 24-44 (YIIG…SISS) and 66-86 (IIMG…WYMV).

It belongs to the Ycf4 family.

It localises to the cellular thylakoid membrane. Seems to be required for the assembly of the photosystem I complex. This is Photosystem I assembly protein Ycf4 from Prochlorococcus marinus (strain MIT 9312).